A 634-amino-acid chain; its full sequence is DNA-directed RNA polymerase subunit gamma (634 aa).

Zn(2+)-binding residues include Cys-74, Cys-76, Cys-89, and Cys-92. 3 residues coordinate Mg(2+): Asp-471, Asp-473, and Asp-475.

It belongs to the RNA polymerase beta' chain family. RpoC1 subfamily. In cyanobacteria the RNAP catalytic core is composed of 2 alpha, 1 beta, 1 beta', 1 gamma and 1 omega subunit. When a sigma factor is associated with the core the holoenzyme is formed, which can initiate transcription. The cofactor is Mg(2+). Zn(2+) serves as cofactor.

The catalysed reaction is RNA(n) + a ribonucleoside 5'-triphosphate = RNA(n+1) + diphosphate. Its function is as follows. DNA-dependent RNA polymerase catalyzes the transcription of DNA into RNA using the four ribonucleoside triphosphates as substrates. The polypeptide is DNA-directed RNA polymerase subunit gamma (Synechococcus sp. (strain CC9902)).